A 130-amino-acid chain; its full sequence is MAQVQFLGTGRRKKSVARVRLVPGDGKFLINNRSLMEYFGKKTLEMIVRQPLELTKSEGRFDVLCNVHGGGTSGQAGAIRLGIARALLKADIGLRPVLKRAGFLTRDPRAKERKKYGLKAARRAPQFSKR.

A disordered region spans residues 109–130 (RAKERKKYGLKAARRAPQFSKR). A compositionally biased stretch (basic residues) spans 111–130 (KERKKYGLKAARRAPQFSKR).

It belongs to the universal ribosomal protein uS9 family.

This Heliobacterium modesticaldum (strain ATCC 51547 / Ice1) protein is Small ribosomal subunit protein uS9.